The chain runs to 558 residues: Protein shisa-7 (558 aa).

A signal peptide spans 1–22 (MPALLLLGTVALLASAAGPAGA). At 23-189 (RPSNDTSSVA…GGEGPGGSTA (167 aa)) the chain is on the extracellular side. Asparagine 26 carries N-linked (GlcNAc...) asparagine glycosylation. Disordered regions lie at residues 53–79 (GGSA…ARAP) and 142–181 (TPPP…GRGG). A compositionally biased stretch (low complexity) spans 57–77 (AGTSANATKTSPASGTGAAAR). Residues 148–181 (GGAGGAGGAGGGPGPGQAGWLEGGRAGGAGGRGG) show a composition bias toward gly residues. The segment at 154–175 (GGAGGGPGPGQAGWLEGGRAGG) is GRID. Residues 190–210 (YVVCGVISFALAVGVGAKVAF) form a helical membrane-spanning segment. Over 211-558 (SKASRAPRAH…RTASKNEVTV (348 aa)) the chain is Cytoplasmic. The segment at 236 to 263 (QAGPATRPDRARSSSLTPGLGGPDSMAP) is disordered. A Phosphoserine modification is found at serine 438. Positions 443-506 (RQSREHLLSP…HHHHALHGSP (64 aa)) are disordered. A compositionally biased stretch (pro residues) spans 453 to 462 (PRSPALPPDP). The span at 466–477 (ASLAASHSNLLL) shows a compositional bias: low complexity. Threonine 532 is subject to Phosphothreonine. The PDZ-binding motif lies at 555 to 558 (EVTV).

Belongs to the shisa family. As to quaternary structure, interacts with GABA(A)R (GABA type A receptor) subunits GABRA1, GABRA2 and GABRG2; the interaction is direct. Does not interact with GABRB2 and GABRB3 subunits. Interacts with AMPAR subunits GRIA1, GRIA2 and GRIA3 and AMPAR auxiliary proteins SHISA6 and SHISA7 in heterologous cells. Interacts (via PDZ-binding motif) with DLG4/PSD-95 (via PDZ domain)in heterologous cells; the interaction is direct. N-glycosylated. As to expression, mainly expressed in neurons. Highly expressed in brain structures including cortex, striatum, olfactory bulb, amygdala hippocampus CA1-3 and dentate gyrus (at protein level).

The protein resides in the postsynaptic density membrane. In terms of biological role, transmembrane protein that regulates gamma-aminobutyric acid type A receptor (GABA(A)R) trafficking, channel deactivation kinetics and pharmacology, necessary for fast inhibitory transmission in the brain. Enhances the action of benzodiazepine, a primary GABA(A)Rs target drug, in the brain. May affect channel kinetics of AMPA-type glutamate receptors (AMPAR), the brain's main excitatory neurotransmitter, necessary for synaptic hippocampal plasticity, and memory recall. May regulate the induction and maintenance of long-term potentiation at Schaffer collaterals/CA3-CA1 excitatory synapses. The polypeptide is Protein shisa-7 (Mus musculus (Mouse)).